The sequence spans 292 residues: Elongation factor Ts (292 aa).

The interval 79 to 82 (TDFV) is involved in Mg(2+) ion dislocation from EF-Tu.

The protein belongs to the EF-Ts family.

It localises to the cytoplasm. Functionally, associates with the EF-Tu.GDP complex and induces the exchange of GDP to GTP. It remains bound to the aminoacyl-tRNA.EF-Tu.GTP complex up to the GTP hydrolysis stage on the ribosome. This Idiomarina loihiensis (strain ATCC BAA-735 / DSM 15497 / L2-TR) protein is Elongation factor Ts (tsf).